The following is a 211-amino-acid chain: Orotate phosphoribosyltransferase (211 aa).

Residues arginine 103, lysine 107, histidine 109, and 129 to 137 each bind 5-phospho-alpha-D-ribose 1-diphosphate; that span reads EDLISTGKS. Serine 133 serves as a coordination point for orotate.

This sequence belongs to the purine/pyrimidine phosphoribosyltransferase family. PyrE subfamily. As to quaternary structure, homodimer. Mg(2+) is required as a cofactor.

It catalyses the reaction orotidine 5'-phosphate + diphosphate = orotate + 5-phospho-alpha-D-ribose 1-diphosphate. It functions in the pathway pyrimidine metabolism; UMP biosynthesis via de novo pathway; UMP from orotate: step 1/2. Catalyzes the transfer of a ribosyl phosphate group from 5-phosphoribose 1-diphosphate to orotate, leading to the formation of orotidine monophosphate (OMP). The chain is Orotate phosphoribosyltransferase from Fusobacterium nucleatum subsp. nucleatum (strain ATCC 25586 / DSM 15643 / BCRC 10681 / CIP 101130 / JCM 8532 / KCTC 2640 / LMG 13131 / VPI 4355).